Consider the following 207-residue polypeptide: LexA repressor (207 aa).

The H-T-H motif DNA-binding region spans 28-48; sequence VREIGEAVGLASSSTVHGHLA. Residues S129 and K167 each act as for autocatalytic cleavage activity in the active site.

The protein belongs to the peptidase S24 family. As to quaternary structure, homodimer.

The catalysed reaction is Hydrolysis of Ala-|-Gly bond in repressor LexA.. Its function is as follows. Represses a number of genes involved in the response to DNA damage (SOS response), including recA and lexA. In the presence of single-stranded DNA, RecA interacts with LexA causing an autocatalytic cleavage which disrupts the DNA-binding part of LexA, leading to derepression of the SOS regulon and eventually DNA repair. The polypeptide is LexA repressor (Geobacillus sp. (strain WCH70)).